The primary structure comprises 199 residues: Recombination protein RecR (199 aa).

A C4-type zinc finger spans residues 57 to 72 (CQSCRTFTEETYCPIC). The Toprim domain maps to 81-176 (DIICVVETPA…MVSRIAHGVP (96 aa)).

The protein belongs to the RecR family.

In terms of biological role, may play a role in DNA repair. It seems to be involved in an RecBC-independent recombinational process of DNA repair. It may act with RecF and RecO. The protein is Recombination protein RecR of Shewanella halifaxensis (strain HAW-EB4).